A 370-amino-acid chain; its full sequence is F-box/kelch-repeat protein At4g38940 (370 aa).

The F-box domain occupies 18–64 (PCLISLLPEEIVVDIVARVPRCYYPTLSQVSRRFRSLVASPEIYKRR). Kelch repeat units follow at residues 131–177 (NIFV…LIDR), 178–230 (KIYV…VIGG), and 263–315 (SACV…SYTG).

In terms of assembly, part of a SCF (ASK-cullin-F-box) protein ligase complex. Interacts with SKP1A/ASK1, SKP1B/ASK2, ASK11, ASK13 and ASK18.

The protein resides in the nucleus. It functions in the pathway protein modification; protein ubiquitination. In terms of biological role, component of SCF(ASK-cullin-F-box) E3 ubiquitin ligase complexes, which may mediate the ubiquitination and subsequent proteasomal degradation of target proteins. The sequence is that of F-box/kelch-repeat protein At4g38940 from Arabidopsis thaliana (Mouse-ear cress).